We begin with the raw amino-acid sequence, 89 residues long: Small ribosomal subunit protein uS14A (89 aa).

Belongs to the universal ribosomal protein uS14 family. In terms of assembly, part of the 30S ribosomal subunit. Contacts proteins S3 and S10.

Binds 16S rRNA, required for the assembly of 30S particles and may also be responsible for determining the conformation of the 16S rRNA at the A site. The protein is Small ribosomal subunit protein uS14A of Bacillus licheniformis (strain ATCC 14580 / DSM 13 / JCM 2505 / CCUG 7422 / NBRC 12200 / NCIMB 9375 / NCTC 10341 / NRRL NRS-1264 / Gibson 46).